The primary structure comprises 80 residues: Acyl carrier protein (80 aa).

Residues Asp-4–Lys-79 enclose the Carrier domain. Ser-39 carries the post-translational modification O-(pantetheine 4'-phosphoryl)serine.

It belongs to the acyl carrier protein (ACP) family. 4'-phosphopantetheine is transferred from CoA to a specific serine of apo-ACP by AcpS. This modification is essential for activity because fatty acids are bound in thioester linkage to the sulfhydryl of the prosthetic group.

It is found in the cytoplasm. Its pathway is lipid metabolism; fatty acid biosynthesis. In terms of biological role, carrier of the growing fatty acid chain in fatty acid biosynthesis. The polypeptide is Acyl carrier protein (Borrelia garinii subsp. bavariensis (strain ATCC BAA-2496 / DSM 23469 / PBi) (Borreliella bavariensis)).